The primary structure comprises 893 residues: Translation initiation factor IF-2 (893 aa).

The tract at residues 1-266 (MVDTKNPGDK…AKPAPSKQRG (266 aa)) is disordered. The span at 59–70 (PADAPTAAAAAP) shows a compositional bias: low complexity. Over residues 71–92 (APAPAPVPSAAPRPAAPPPPSR) the composition is skewed to pro residues. Low complexity predominate over residues 93–104 (PQQSRSQSPSRS). 2 stretches are compositionally biased toward basic and acidic residues: residues 128-148 (ARVR…RRNS) and 155-196 (AERE…EAKR). Over residues 197 to 226 (PAAAATPAKSATPAARPTGAPAVRAPGVAA) the composition is skewed to low complexity. In terms of domain architecture, tr-type G spans 389 to 560 (PRSPVVTVMG…ALQAELLDLK (172 aa)). The interval 398 to 405 (GHVDHGKT) is G1. 398 to 405 (GHVDHGKT) provides a ligand contact to GTP. Residues 423 to 427 (GITQH) are G2. The G3 stretch occupies residues 446–449 (DTPG). GTP contacts are provided by residues 446–450 (DTPGH) and 500–503 (NKID). Residues 500 to 503 (NKID) are G4. The segment at 536-538 (SAK) is G5.

This sequence belongs to the TRAFAC class translation factor GTPase superfamily. Classic translation factor GTPase family. IF-2 subfamily.

The protein resides in the cytoplasm. In terms of biological role, one of the essential components for the initiation of protein synthesis. Protects formylmethionyl-tRNA from spontaneous hydrolysis and promotes its binding to the 30S ribosomal subunits. Also involved in the hydrolysis of GTP during the formation of the 70S ribosomal complex. This chain is Translation initiation factor IF-2, found in Rhodopseudomonas palustris (strain BisA53).